The primary structure comprises 300 residues: ATP-dependent (S)-NAD(P)H-hydrate dehydratase (300 aa).

The YjeF C-terminal domain maps to 6-297 (YAGKIKEFIP…GCIHQSFTSL (292 aa)). Residues glycine 106 and 158 to 164 (NEVEFKR) contribute to the (6S)-NADPHX site. ATP is bound by residues 188 to 192 (KGSTD) and 218 to 227 (GSNRRCGGQG). Aspartate 228 provides a ligand contact to (6S)-NADPHX.

This sequence belongs to the NnrD/CARKD family. Mg(2+) serves as cofactor.

The enzyme catalyses (6S)-NADHX + ATP = ADP + phosphate + NADH + H(+). It carries out the reaction (6S)-NADPHX + ATP = ADP + phosphate + NADPH + H(+). Its function is as follows. Catalyzes the dehydration of the S-form of NAD(P)HX at the expense of ATP, which is converted to ADP. Together with NAD(P)HX epimerase, which catalyzes the epimerization of the S- and R-forms, the enzyme allows the repair of both epimers of NAD(P)HX, a damaged form of NAD(P)H that is a result of enzymatic or heat-dependent hydration. The chain is ATP-dependent (S)-NAD(P)H-hydrate dehydratase from Pediculus humanus subsp. corporis (Body louse).